The primary structure comprises 64 residues: Conotoxin VnMLCL-05 (64 aa).

The signal sequence occupies residues 1-19 (MLCLPVFIILLLLASPAAP). A propeptide spanning residues 20–43 (NPLQTRIQSNLIRAGPEDANIKTD) is cleaved from the precursor. Position 63 is a lysine amide (lysine 63).

It belongs to the conotoxin T superfamily. Expressed by the venom duct.

The protein localises to the secreted. This Conus ventricosus (Mediterranean cone) protein is Conotoxin VnMLCL-05.